A 735-amino-acid chain; its full sequence is Ion-translocating oxidoreductase complex subunit C (735 aa).

2 consecutive 4Fe-4S ferredoxin-type domains span residues 368–397 (MGAP…QQLY) and 407–436 (KATA…VQYF). The [4Fe-4S] cluster site is built by Cys-377, Cys-380, Cys-383, Cys-387, Cys-416, Cys-419, Cys-422, and Cys-426. Residues 534–715 (QARAKQAAHP…AVDPRKAAVA (182 aa)) are disordered. Residues 666–689 (QQAGSEPAEPAAPRKAAVEAAIAR) are compositionally biased toward low complexity.

The protein belongs to the 4Fe4S bacterial-type ferredoxin family. RnfC subfamily. In terms of assembly, the complex is composed of six subunits: RsxA, RsxB, RsxC, RsxD, RsxE and RsxG. Requires [4Fe-4S] cluster as cofactor.

The protein localises to the cell inner membrane. Part of a membrane-bound complex that couples electron transfer with translocation of ions across the membrane. Required to maintain the reduced state of SoxR. The protein is Ion-translocating oxidoreductase complex subunit C of Salmonella paratyphi B (strain ATCC BAA-1250 / SPB7).